We begin with the raw amino-acid sequence, 117 residues long: Alpha-endosulfine (117 aa).

Residues 1–53 (MAAPLGTGARAEDSGQEKQDSQEKETVIPERAEEAKLKAKYPNLGQKPGGSDF) are disordered. Residues 10–37 (RAEDSGQEKQDSQEKETVIPERAEEAKL) are compositionally biased toward basic and acidic residues. Residue serine 67 is modified to Phosphoserine; by GWL. A disordered region spans residues 76–117 (KMKNKQLPTAGPDKNLVTGDHIPKPQDLPQRKSSLVASKLAG).

This sequence belongs to the endosulfine family. In terms of processing, phosphorylation at Ser-67 by GWL during mitosis is essential for interaction with PPP2R2D (PR55-delta) and subsequent inactivation of PP2A.

It is found in the cytoplasm. Protein phosphatase inhibitor that specifically inhibits protein phosphatase 2A (PP2A) during mitosis. When phosphorylated at Ser-67 during mitosis, specifically interacts with PPP2R2D (PR55-delta) and inhibits its activity, leading to inactivation of PP2A, an essential condition to keep cyclin-B1-CDK1 activity high during M phase. In Gallus gallus (Chicken), this protein is Alpha-endosulfine (ENSA).